A 344-amino-acid chain; its full sequence is Ion-translocating oxidoreductase complex subunit D (344 aa).

4 helical membrane-spanning segments follow: residues 23 to 43 (LVLG…GPGT), 44 to 64 (LLNL…MLAL), 77 to 99 (SALV…WLTL), and 120 to 140 (PFNP…LEMT). T172 bears the FMN phosphoryl threonine mark. Helical transmembrane passes span 198-218 (LGSA…LFLL), 222-242 (LFTW…SLLF), 252-272 (GSPL…FIVT), 285-305 (LVFG…GGYP), and 306-326 (DGVA…DYYT).

The protein belongs to the NqrB/RnfD family. In terms of assembly, the complex is composed of six subunits: RnfA, RnfB, RnfC, RnfD, RnfE and RnfG. FMN is required as a cofactor.

It is found in the cell inner membrane. Its function is as follows. Part of a membrane-bound complex that couples electron transfer with translocation of ions across the membrane. This Pseudomonas aeruginosa (strain UCBPP-PA14) protein is Ion-translocating oxidoreductase complex subunit D.